The sequence spans 188 residues: Elongation factor P (188 aa).

This sequence belongs to the elongation factor P family.

Its subcellular location is the cytoplasm. Its pathway is protein biosynthesis; polypeptide chain elongation. Functionally, involved in peptide bond synthesis. Stimulates efficient translation and peptide-bond synthesis on native or reconstituted 70S ribosomes in vitro. Probably functions indirectly by altering the affinity of the ribosome for aminoacyl-tRNA, thus increasing their reactivity as acceptors for peptidyl transferase. The sequence is that of Elongation factor P (efp) from Ureaplasma parvum serovar 3 (strain ATCC 700970).